The sequence spans 215 residues: Glutathione S-transferase F9 (215 aa).

Residues 2–81 (VLKVYGPHFA…YVAEKYRSQG (80 aa)) form the GST N-terminal domain. Position 11-12 (11-12 (AS)) interacts with glutathione. Phosphoserine is present on Ser-12. The residue at position 35 (Met-35) is a Methionine sulfoxide. Residues 39-40 (HK), 52-53 (TV), and 65-66 (ES) each bind glutathione. A GST C-terminal domain is found at 88-215 (TVEDRGQVEQ…ETVAKYSFPA (128 aa)). Residues Met-118, Met-123, and Met-184 each carry the methionine sulfoxide modification.

This sequence belongs to the GST superfamily. Phi family. Oxidated at Met-35, Met-118, Met-123 and Met-184 in oxidative stress conditions (e.g. hydrogen peroxide H(2)O(2)).

The protein localises to the cytoplasm. The protein resides in the cytosol. It carries out the reaction RX + glutathione = an S-substituted glutathione + a halide anion + H(+). Redox-regulated enzyme; in oxidative stress conditions methionine oxidation ensure a thermodynamic and structural compensatory mechanism to guarantee H(2)O(2) peroxidase activity despite transferase activity inhibition. In vitro, possesses glutathione S-transferase activity toward 1-chloro-2,4-dinitrobenzene (CDNB) and benzyl isothiocyanate (BITC), and glutathione peroxidase activity toward cumene hydroperoxide and linoleic acid-13-hydroperoxide. May be involved in the conjugation of reduced glutathione to a wide number of exogenous and endogenous hydrophobic electrophiles and have a detoxification role against certain herbicides. The chain is Glutathione S-transferase F9 from Arabidopsis thaliana (Mouse-ear cress).